A 250-amino-acid polypeptide reads, in one-letter code: DNA repair protein RecO (250 aa).

The protein belongs to the RecO family.

Involved in DNA repair and RecF pathway recombination. This Syntrophobacter fumaroxidans (strain DSM 10017 / MPOB) protein is DNA repair protein RecO.